Here is an 81-residue protein sequence, read N- to C-terminus: MLIKVKTLTGKEIEIDIEPTDKVERIKERVEEKEGIPPQQQRLIYSGKQMNDEKTAADYKILGGSVLHLVLALRGGGGLGQ.

N6-acetyllysine is present on Lys48. The interval 70–72 (VLA) is interaction with UBE1C. Residue Gly76 forms a Glycyl lysine isopeptide (Gly-Lys) (interchain with K-? in acceptor proteins) linkage. The propeptide occupies 77–81 (GGLGQ).

Belongs to the ubiquitin family. Interacts with AHR; interaction is direct. Interacts with NUB1; interaction is direct. Interacts with ESR1. In terms of processing, cleavage of precursor form by UCHL3 or SENP8 is necessary for function. In terms of tissue distribution, expressed in the CA1 region of the hippocampus (at protein level).

Its subcellular location is the nucleus. Ubiquitin-like protein which plays an important role in cell cycle control and embryogenesis via its conjugation to a limited number of cellular proteins, such as cullins or p53/TP53. Attachment of NEDD8 to cullins is critical for the recruitment of E2 to the cullin-RING-based E3 ubiquitin-protein ligase complex, thus facilitating polyubiquitination and proteasomal degradation of cyclins and other regulatory proteins. Attachment of NEDD8 to p53/TP53 inhibits p53/TP53 transcriptional activity. Covalent attachment to its substrates requires prior activation by the E1 complex UBE1C-APPBP1 and linkage to the E2 enzyme UBE2M. This chain is Ubiquitin-like protein NEDD8 (Nedd8), found in Rattus norvegicus (Rat).